Consider the following 88-residue polypeptide: UPF0213 protein SAG0778 (88 aa).

The GIY-YIG domain occupies 4-80 (VPAYMYVLEC…QKTRQAKLTY (77 aa)).

It belongs to the UPF0213 family.

The polypeptide is UPF0213 protein SAG0778 (Streptococcus agalactiae serotype V (strain ATCC BAA-611 / 2603 V/R)).